The primary structure comprises 537 residues: Mitochondrial distribution and morphology protein 34 (537 aa).

The SMP-LTD domain occupies 1–195 (MAFNFNWSPL…LPAIIHRLSL (195 aa)). Disordered regions lie at residues 320–339 (YTFS…RPSL), 348–403 (GLSL…IMPH), 421–493 (GRSP…DTSS), and 516–537 (KNGN…YEAR). The segment covering 355–371 (RHSKAGRKKKTRVVNLR) has biased composition (basic residues). A compositionally biased stretch (acidic residues) spans 378 to 391 (ANSEEEEDTPETDS). The span at 425-441 (DLQQQPRRPSFRAQATN) shows a compositional bias: polar residues.

The protein belongs to the MDM34 family. As to quaternary structure, component of the ER-mitochondria encounter structure (ERMES) or MDM complex, composed of MMM1, MDM10, MDM12 and MDM34.

It is found in the mitochondrion outer membrane. In terms of biological role, component of the ERMES/MDM complex, which serves as a molecular tether to connect the endoplasmic reticulum (ER) and mitochondria. Components of this complex are involved in the control of mitochondrial shape and protein biogenesis, and function in nonvesicular lipid trafficking between the ER and mitochondria. MDM34 is required for the interaction of the ER-resident membrane protein MMM1 and the outer mitochondrial membrane-resident beta-barrel protein MDM10. This chain is Mitochondrial distribution and morphology protein 34, found in Chaetomium globosum (strain ATCC 6205 / CBS 148.51 / DSM 1962 / NBRC 6347 / NRRL 1970) (Soil fungus).